Here is a 930-residue protein sequence, read N- to C-terminus: MEYERRGGRGDRTGRYGATDRSQDDSGENRSRDHDYRDMDYRSYPREYGSQEGKHEYDDSSEEQSAEDSYEASPGSETQRRRRRRHRHSPTGPPGFPRDGDYRDQDYRTEQGEEEEEEDEEEEEEKASNIVMLRMLPQAATEDDIRGQLQSHGVQAREVRLMRNKSSGQSRGFAFVEFSHLQDATRWMEANQHSLNILGQKVSMHYSDPKPKINEDWLCNKCGVQNFKRREKCFKCGVPKSEAEQKLPLGTRLDQQALPLGGRELSQGLLPLPQPYQAQGVLTSQALSQGSEPSSENANDTIILRNLNPHSTMDSILGALAPYAVLSSSNVRVIKDKQTQLNRGFAFIQLSTIVEAAQLLQILQALHPPLTIDGKTINVEFAKGSKRDMASNEGSRINAASVASTAIAAAQWAISQASQGGESAWAAPEEPPVDYSYYQQDEGYGSSQGTDSLYAHGYLKNSKGPGMTGTKGDPAGTGPEASLEAGADSVSLQAFSRAQPGAAPGLYQQSAEGSSGQSTATNSQSYTIISPAVLKAELQSPTQPSSSAFPPATSPTAPEAYSQYPVPDVSTYQYDETSGYYYDPQTGLYYDPNSQYYYNAQSQQYLYWDGERRTYIPALEQSADGHKDTGASSKEGKEKKEKHKTKTAQQIAKDMERWARSLNKQKENFKNSFQPISALRDDERRESATADAGYAILEKKGALAERQHTSMDLPKLASDDRPSPPRGLVAAYSGESDSEEEQERGGPEREEKLTDWQKLACLLCRRQFPSKEALIRHQQLSGLHKQNLEIHRRAHLSENELEALEKNDMEQMKYRDRAAERREKYGIPEPPEPKRRKYGGISTASVDFEQPTRDGLGSDNIGSRMLQAMGWKEGSGLGRKKQGIVTPIEAQTRVRGSGLGARGSSYGVTSTESYKETLHKTMVTRFNEAQ.

Basic and acidic residues-rich tracts occupy residues methionine 1–glycine 14 and arginine 21–proline 45. A disordered region spans residues methionine 1–alanine 127. A compositionally biased stretch (acidic residues) spans aspartate 59–tyrosine 70. Residues serine 61 and serine 89 each carry the phosphoserine modification. Over residues arginine 80 to serine 89 the composition is skewed to basic residues. A compositionally biased stretch (basic and acidic residues) spans arginine 98–glutamine 111. A compositionally biased stretch (acidic residues) spans glycine 112–glutamate 125. The RRM 1 domain maps to asparagine 129 to proline 209. The RanBP2-type zinc finger occupies lysine 212–glutamate 242. The 85-residue stretch at aspartate 300–glycine 384 folds into the RRM 2 domain. Lysine 383 bears the N6-acetyllysine mark. Disordered regions lie at residues glycine 464–alanine 487, alanine 503–asparagine 522, glutamate 537–valine 566, glutamate 620–lysine 646, and aspartate 712–leucine 753. Polar residues predominate over residues tyrosine 507–asparagine 522. A compositionally biased stretch (low complexity) spans serine 540–serine 562. Residues alanine 623–lysine 639 show a composition bias toward basic and acidic residues. Residues serine 718, serine 723, serine 733, serine 736, and serine 738 each carry the phosphoserine modification. Residues glutamate 743–leucine 753 are compositionally biased toward basic and acidic residues. A C2H2-type; atypical zinc finger spans residues leucine 759 to histidine 784. 3 positions are modified to phosphoserine: serine 781, serine 797, and serine 845. The tract at residues alanine 818 to isoleucine 861 is disordered. Positions serine 858–serine 904 constitute a G-patch domain. At arginine 902 the chain carries Omega-N-methylarginine.

As to quaternary structure, associates with the spliceosome. Component of a large chromatin remodeling complex, at least composed of MYSM1, PCAF, RBM10 and KIF11/TRIP5.

The protein localises to the nucleus. Functionally, binds to ssRNA containing the consensus sequence 5'-AGGUAA-3'. May be involved in post-transcriptional processing, most probably in mRNA splicing. Binds to RNA homopolymers, with a preference for poly(G) and poly(U) and little for poly(A). May bind to specific miRNA hairpins. This chain is RNA-binding protein 10, found in Mus musculus (Mouse).